The chain runs to 581 residues: Oligo-1,6-glucosidase IMA5 (581 aa).

Residue aspartate 210 is the Nucleophile of the active site. Glutamate 272 (proton donor) is an active-site residue.

It belongs to the glycosyl hydrolase 13 family.

The catalysed reaction is Hydrolysis of (1-&gt;6)-alpha-D-glucosidic linkages in some oligosaccharides produced from starch and glycogen by alpha-amylase, and in isomaltose.. Functionally, alpha-glucosidase with specificity for isomaltose, maltose, and palatinose. This is Oligo-1,6-glucosidase IMA5 (IMA5) from Saccharomyces cerevisiae (strain ATCC 204508 / S288c) (Baker's yeast).